The primary structure comprises 91 residues: Small ribosomal subunit protein uS19 (91 aa).

It belongs to the universal ribosomal protein uS19 family.

In terms of biological role, protein S19 forms a complex with S13 that binds strongly to the 16S ribosomal RNA. This Janthinobacterium sp. (strain Marseille) (Minibacterium massiliensis) protein is Small ribosomal subunit protein uS19.